The following is a 390-amino-acid chain: NADH-quinone oxidoreductase subunit D (390 aa).

This sequence belongs to the complex I 49 kDa subunit family. NDH-1 is composed of 14 different subunits. Subunits NuoB, C, D, E, F, and G constitute the peripheral sector of the complex.

It is found in the cell inner membrane. The enzyme catalyses a quinone + NADH + 5 H(+)(in) = a quinol + NAD(+) + 4 H(+)(out). Its function is as follows. NDH-1 shuttles electrons from NADH, via FMN and iron-sulfur (Fe-S) centers, to quinones in the respiratory chain. The immediate electron acceptor for the enzyme in this species is believed to be ubiquinone. Couples the redox reaction to proton translocation (for every two electrons transferred, four hydrogen ions are translocated across the cytoplasmic membrane), and thus conserves the redox energy in a proton gradient. The protein is NADH-quinone oxidoreductase subunit D of Geobacter metallireducens (strain ATCC 53774 / DSM 7210 / GS-15).